Here is a 133-residue protein sequence, read N- to C-terminus: Ribonuclease P protein component (133 aa).

The protein belongs to the RnpA family. Consists of a catalytic RNA component (M1 or rnpB) and a protein subunit.

The enzyme catalyses Endonucleolytic cleavage of RNA, removing 5'-extranucleotides from tRNA precursor.. Functionally, RNaseP catalyzes the removal of the 5'-leader sequence from pre-tRNA to produce the mature 5'-terminus. It can also cleave other RNA substrates such as 4.5S RNA. The protein component plays an auxiliary but essential role in vivo by binding to the 5'-leader sequence and broadening the substrate specificity of the ribozyme. This Pseudomonas fluorescens (strain Pf0-1) protein is Ribonuclease P protein component.